Here is a 417-residue protein sequence, read N- to C-terminus: Gamma-glutamyl phosphate reductase (417 aa).

The protein belongs to the gamma-glutamyl phosphate reductase family.

Its subcellular location is the cytoplasm. It carries out the reaction L-glutamate 5-semialdehyde + phosphate + NADP(+) = L-glutamyl 5-phosphate + NADPH + H(+). The protein operates within amino-acid biosynthesis; L-proline biosynthesis; L-glutamate 5-semialdehyde from L-glutamate: step 2/2. Its function is as follows. Catalyzes the NADPH-dependent reduction of L-glutamate 5-phosphate into L-glutamate 5-semialdehyde and phosphate. The product spontaneously undergoes cyclization to form 1-pyrroline-5-carboxylate. This chain is Gamma-glutamyl phosphate reductase, found in Escherichia coli O6:H1 (strain CFT073 / ATCC 700928 / UPEC).